A 330-amino-acid chain; its full sequence is MENVSFSLDRTLWVFLLAMLGSTAGQPLGGESVCTARPLARYSITFTGKWSQTAFPKQYPLFRPPAQWSSLLGAAHSSDYSMWRKNEYVSNGLRDFAERGEAWALMKEIEAAGEKLQSVHAVFSAPAVPSGTGQTSAELEVHPRHSLVSFVVRIVPSPDWFVGIDSLDLCEGGRWKEQVVLDLYPHDAGTDSGFTFSSPNFATIPQDTVTEITASSPSHPANSFYYPRLKSLPPIAKVTFVRLRQSPRAFAPPSLDLASRGNEIVDSLSVPETPLDCEVSLWSSWGLCGGPCGKLGAKSRTRYVRVQPANNGTPCPELEEEAECAPDNCV.

The signal sequence occupies residues 1–25; it reads MENVSFSLDRTLWVFLLAMLGSTAG. Positions 30 to 220 constitute a Spondin domain; sequence GESVCTARPL…EITASSPSHP (191 aa). A disulfide bridge links Cys-34 with Cys-170. Glu-140 lines the a divalent metal cation pocket. Ca(2+) contacts are provided by Asp-159, Asp-187, and Asp-191. One can recognise a TSP type-1 domain in the interval 276–330; sequence DCEVSLWSSWGLCGGPCGKLGAKSRTRYVRVQPANNGTPCPELEEEAECAPDNCV. C-linked (Man) tryptophan glycosylation is present at Trp-282.

In terms of assembly, monomer. Interacts with integrin. As to expression, abundantly expressed in the developing hippocampus.

The protein localises to the secreted. It is found in the extracellular space. The protein resides in the extracellular matrix. Its function is as follows. Cell adhesion protein that promotes adhesion and outgrowth of hippocampal embryonic neurons. Binds directly to bacteria and their components and functions as an opsonin for macrophage phagocytosis of bacteria. Essential in the initiation of the innate immune response and represents a unique pattern-recognition molecule in the ECM for microbial pathogens. The sequence is that of Spondin-2 (Spon2) from Rattus norvegicus (Rat).